The following is a 548-amino-acid chain: MDPAWDGSQGSRPGTASIRVRELSWQGLNNPQPQNKRLGSHGDIYRERRVEEHLSPARLQALAQVDDLQLVRVLEMCVDTRKNSLGNFGMHLPNLIQLKLNHSCLGSLRDLGTSLGQLQVLWLARCGLTDLDGIGSFLALKELYVSYNNISDLSPLCLLEQLEVLDLEGNNVEDLGQMRYLQLCPRLTTLTLEGNLVCLKPDPGPSNKAPQDYNYRAEVKKLIPQLHILDEVPTTCTNLPAPQKLSQDWLMVKEAIKEGNVLDILLPRLECSHGATIRKFDPTLPVPETQPWALSLLVPEGPLPEGLLSENPAAEDHASNLTHGPGQVLCGNPTKGLRERRNQYQEWAPLEQLPPHRPDLAIRPSTLRPDPAESCDLSMTGLRAWREPGLRPLLQRQLEFQQERLTHVQAQDPQKAPIEQEDQTGPKTSLTPLRLASELSRTSGFHLIPSPPKYPMPPESGISSLGRSADLPFRGRRLRVLGSLGPSLGEGSVLGERLALRALEVSSDPSHRAQGCPDPKPSLGPATCPLGLHCLHHLNPIPPAHPFP.

LRR repeat units lie at residues 94 to 115 (NLIQLKLNHSCLGSLRDLGTSL), 117 to 138 (QLQVLWLARCGLTDLDGIGSFL), 139 to 160 (ALKELYVSYNNISDLSPLCLLE), 161 to 182 (QLEVLDLEGNNVEDLGQMRYLQ), and 186 to 206 (RLTTLTLEGNLVCLKPDPGPS). One can recognise an LRRCT domain in the interval 207–249 (NKAPQDYNYRAEVKKLIPQLHILDEVPTTCTNLPAPQKLSQDW). The tract at residues 405–433 (LTHVQAQDPQKAPIEQEDQTGPKTSLTPL) is disordered.

This sequence belongs to the LRRC56 family. As to quaternary structure, interacts with IFT88.

Its subcellular location is the cell projection. It localises to the cilium. Functionally, required for the assembly of dynein arms. This is Leucine-rich repeat-containing protein 56 (Lrrc56) from Rattus norvegicus (Rat).